The primary structure comprises 397 residues: Argininosuccinate synthase (397 aa).

An ATP-binding site is contributed by 8–16; sequence AYSGGLDTS. Residues Tyr86 and Ser91 each coordinate L-citrulline. Gly116 serves as a coordination point for ATP. Residues Thr118, Asn122, and Asp123 each coordinate L-aspartate. Asn122 provides a ligand contact to L-citrulline. L-citrulline-binding residues include Arg126, Ser175, Ser184, Glu260, and Tyr272.

The protein belongs to the argininosuccinate synthase family. Type 1 subfamily. As to quaternary structure, homotetramer.

The protein localises to the cytoplasm. The catalysed reaction is L-citrulline + L-aspartate + ATP = 2-(N(omega)-L-arginino)succinate + AMP + diphosphate + H(+). It participates in amino-acid biosynthesis; L-arginine biosynthesis; L-arginine from L-ornithine and carbamoyl phosphate: step 2/3. The sequence is that of Argininosuccinate synthase from Clostridium botulinum (strain ATCC 19397 / Type A).